A 485-amino-acid polypeptide reads, in one-letter code: Glucagon receptor (485 aa).

The first 26 residues, 1 to 26 (MPLTQLHCPHLLLLLLVLSCLPEAPS), serve as a signal peptide directing secretion. Topologically, residues 27-137 (AQVMDFLFEK…EIEVQKGVAK (111 aa)) are extracellular. Disulfide bonds link cysteine 44–cysteine 68, cysteine 59–cysteine 101, and cysteine 82–cysteine 122. Asparagine 47, asparagine 60, asparagine 75, asparagine 79, and asparagine 118 each carry an N-linked (GlcNAc...) asparagine glycan. A helical transmembrane segment spans residues 138 to 162 (MYSSQQVMYTVGYSLSLGALLLALV). Topologically, residues 163–174 (ILLGLRKLHCTR) are cytoplasmic. The helical transmembrane segment at 175-199 (NYIHGNLFASFVLKAGSVLVIDWLL) threads the bilayer. Residues 200 to 226 (KTRYSQKIGDDLSVSVWLSDGAMAGCR) lie on the Extracellular side of the membrane. A disulfide bond links cysteine 225 and cysteine 295. Residues 227–250 (VATVIMQYGIIANYCWLLVEGVYL) traverse the membrane as a helical segment. Over 251 to 264 (YSLLSLATFSERSF) the chain is Cytoplasmic. The chain crosses the membrane as a helical span at residues 265-286 (FSLYLGIGWGAPLLFVIPWVVV). Residues 287–304 (KCLFENVQCWTSNDNMGF) lie on the Extracellular side of the membrane. Residues 305–327 (WWILRIPVFLALLINFFIFVHII) form a helical membrane-spanning segment. Residues 328-351 (HLLVAKLRAHQMHYADYKFRLARS) lie on the Cytoplasmic side of the membrane. The tract at residues 351-354 (STLT) is important for allosteric inhibitor binding. Residues 352–370 (TLTLIPLLGVHEVVFAFVT) traverse the membrane as a helical segment. Residues 371–382 (DEHAQGTLRSTK) lie on the Extracellular side of the membrane. The chain crosses the membrane as a helical span at residues 383 to 403 (LFFDLFLSSFQGLLVAVLYCF). Over 404–485 (LNKEVQAELM…SLPRLADSPT (82 aa)) the chain is Cytoplasmic. Residues 457–475 (AGSSSGTGCVPSMETSLAS) are compositionally biased toward polar residues. Residues 457 to 485 (AGSSSGTGCVPSMETSLASSLPRLADSPT) form a disordered region. 2 positions are modified to phosphoserine: serine 460 and serine 476.

It belongs to the G-protein coupled receptor 2 family. Ligand-binding promotes phosphorylation of serine residues in the C-terminal cytoplasmic domain. Phosphorylation is important for receptor endocytosis after ligand-binding. Expressed predominantly in liver, kidney, adrenal, lung and stomach, while lower levels of expression are detected in brown and white adipose tissue, cerebellum, duodenum and heart.

It is found in the cell membrane. In terms of biological role, G-protein coupled receptor for glucagon that plays a central role in the regulation of blood glucose levels and glucose homeostasis. Regulates the rate of hepatic glucose production by promoting glycogen hydrolysis and gluconeogenesis. Plays an important role in mediating the responses to fasting. Ligand binding causes a conformation change that triggers signaling via guanine nucleotide-binding proteins (G proteins) and modulates the activity of down-stream effectors, such as adenylate cyclase. Promotes activation of adenylate cyclase. Besides, plays a role in signaling via a phosphatidylinositol-calcium second messenger system. This is Glucagon receptor (Gcgr) from Mus musculus (Mouse).